We begin with the raw amino-acid sequence, 445 residues long: MPSRAEDYEVLYTIGTGSYGRCQKIRRKSDGKILVWKELDYGSMTEAEKQMLVSEVNLLRELKHPNIVRYYDRIIDRTNTTLYIVMEYCEGGDLASVITKGTKERQYLDEEFVLRVMTQLTLALKECHRRSDGGHTVLHRDLKPANVFLDGKQNVKLGDFGLARILNHDTSFAKTFVGTPYYMSPEQMNRMSYNEKSDIWSLGCLLYELCALMPPFTAFSQKELAGKIREGKFRRIPYRYSDELNEIITRMLNLKDYHRPSVEEILENPLIADLVADEQRRNLERRGRQLGEPEKSQDSSPVLSELKLKEIQLQERERALKAREERLEQKEQELCVRERLAEDKLARAENLLKNYSLLKERKFLSLASNPELLNLPSSVIKKKVHFSGESKENIMRSENSESQLTSKSKCKDLKKRLHAAQLRAQALSDIEKNYQLKSRQILGMR.

A Protein kinase domain is found at 8–271; the sequence is YEVLYTIGTG…VEEILENPLI (264 aa). Residues 14-22 and Lys-37 contribute to the ATP site; that span reads IGTGSYGRC. Asp-141 (proton acceptor) is an active-site residue. Phosphothreonine; by autocatalysis is present on Thr-170. Position 171 is a phosphoserine; by autocatalysis (Ser-171). Phosphothreonine; by autocatalysis is present on residues Thr-175 and Thr-179. The residue at position 184 (Ser-184) is a Phosphoserine. Ser-241 carries the post-translational modification Phosphoserine; by autocatalysis. The segment at 264 to 445 is interaction with PCNT; sequence EILENPLIAD…LKSRQILGMR (182 aa). Phosphoserine is present on residues Ser-296 and Ser-300. Residues 301–445 are interaction with CEP85; sequence PVLSELKLKE…LKSRQILGMR (145 aa). A coiled-coil region spans residues 303-362; it reads LSELKLKEIQLQERERALKAREERLEQKEQELCVRERLAEDKLARAENLLKNYSLLKERK. Residues 306-334 form a leucine-zipper region; it reads LKLKEIQLQERERALKAREERLEQKEQEL. Residues 329 to 445 are necessary for interaction with MAD1L1; that stretch reads QKEQELCVRE…LKSRQILGMR (117 aa). The tract at residues 333–370 is required for microtubule binding and for localization to the centrosomes; it reads ELCVRERLAEDKLARAENLLKNYSLLKERKFLSLASNP. Ser-356 and Ser-365 each carry phosphoserine; by STK3/MST2. Phosphoserine occurs at positions 387, 390, 397, and 402. The interaction with SAV1 and STK3/MST2 stretch occupies residues 403-439; sequence QLTSKSKCKDLKKRLHAAQLRAQALSDIEKNYQLKSR. Residue Ser-406 is modified to Phosphoserine; by STK3/MST2. Residues 406 to 430 are a coiled coil; it reads SKSKCKDLKKRLHAAQLRAQALSDI. Residue Ser-428 is modified to Phosphoserine. Ser-438 bears the Phosphoserine; by STK3/MST2 mark.

It belongs to the protein kinase superfamily. NEK Ser/Thr protein kinase family. NIMA subfamily. Isoform 1, isoform 2 and isoform 4 form homo- and heterodimers. Interacts with NECAB3 and HMGA2. Isoform 1 interacts with CDC20, CTNB1, MAD1L1, MAPK, NEK11, NPM1, NDC80, PCNT and SGO1. Isoform 1 interacts with STK3/MST2 (via SARAH domain) and SAV1 (via SARAH domain). Isoform 1 and isoform 2 interact with MAD2L1. Isoform 1 and isoform 4 interact with PPP1CA and PPP1CC. Interacts with CEP68; the interaction leads to phosphorylation of CEP68. Interacts with CNTLN; the interaction leads to phosphorylation of CNTLN. Isoform 1 interacts with CEP85. Interacts with CCDC102B; the interaction leads to phosphorylation of CCDC102B. Mg(2+) serves as cofactor. Activated by autophosphorylation. Protein phosphatase 1 represses autophosphorylation and activation of isoform 1 by dephosphorylation. Phosphorylation by STK3/MST2 is necessary for its localization to the centrosome. Isoform 1 and isoform 2 are expressed in peripheral blood T-cells and a wide variety of transformed cell types. Isoform 1 and isoform 4 are expressed in the testis. Up-regulated in various cancer cell lines, as well as primary breast tumors.

It localises to the nucleus. Its subcellular location is the nucleolus. The protein resides in the cytoplasm. It is found in the cytoskeleton. The protein localises to the microtubule organizing center. It localises to the centrosome. Its subcellular location is the spindle pole. The protein resides in the chromosome. It is found in the centromere. The protein localises to the kinetochore. The catalysed reaction is L-seryl-[protein] + ATP = O-phospho-L-seryl-[protein] + ADP + H(+). It carries out the reaction L-threonyl-[protein] + ATP = O-phospho-L-threonyl-[protein] + ADP + H(+). With respect to regulation, isoform 1 is inhibited by ionizing radiation in the presence of PPP1CA. Its catalytic activity is inhibited by the inhibitor CCT241950. In the presence of this inhibitor, displays an autoinhibited conformation: Tyr-70 side chain points into the active site, interacts with the activation loop, and blocks the alphaC helix. Protein kinase which is involved in the control of centrosome separation and bipolar spindle formation in mitotic cells and chromatin condensation in meiotic cells. Regulates centrosome separation (essential for the formation of bipolar spindles and high-fidelity chromosome separation) by phosphorylating centrosomal proteins such as CROCC, CEP250 and NINL, resulting in their displacement from the centrosomes. Regulates kinetochore microtubule attachment stability in mitosis via phosphorylation of NDC80. Involved in regulation of mitotic checkpoint protein complex via phosphorylation of CDC20 and MAD2L1. Plays an active role in chromatin condensation during the first meiotic division through phosphorylation of HMGA2. Phosphorylates: PPP1CC; SGO1; NECAB3 and NPM1. Essential for localization of MAD2L1 to kinetochore and MAPK1 and NPM1 to the centrosome. Phosphorylates CEP68 and CNTLN directly or indirectly. NEK2-mediated phosphorylation of CEP68 promotes CEP68 dissociation from the centrosome and its degradation at the onset of mitosis. Involved in the regulation of centrosome disjunction. Phosphorylates CCDC102B either directly or indirectly which causes CCDC102B to dissociate from the centrosome and allows for centrosome separation. Functionally, phosphorylates and activates NEK11 in G1/S-arrested cells. Its function is as follows. Not present in the nucleolus and, in contrast to isoform 1, does not phosphorylate and activate NEK11 in G1/S-arrested cells. In Homo sapiens (Human), this protein is Serine/threonine-protein kinase Nek2 (NEK2).